The sequence spans 135 residues: HVA22-like protein d (135 aa).

3 consecutive transmembrane segments (helical) span residues 11–31, 42–62, and 63–83; these read LHSG…SVIA, QWLA…ILQS, and LIEW…WLVL.

Belongs to the DP1 family. As to expression, predominantly expressed in flower buds.

The protein resides in the membrane. The sequence is that of HVA22-like protein d (HVA22D) from Arabidopsis thaliana (Mouse-ear cress).